The chain runs to 83 residues: Bublin coiled-coil protein (83 aa).

The tract at residues 1 to 24 is disordered; the sequence is MSGPNGDLGMPVEAGAEGEEDGFG. Positions 25 to 74 form a coiled coil; sequence EAEYAAINSMLDQINSCLDHLEEKNDHLHARLQELLESNRQTRLEFQQQL. The residue at position 82 (Ser-82) is a Phosphoserine.

This sequence belongs to the UPF0184 (EST00098) family.

It localises to the cell junction. The protein localises to the cytoplasm. It is found in the cytoskeleton. In terms of biological role, essential for intermediate filament organization in intestinal cells, interacts with intermediate filament and regulates intestinal lumen morphology. The protein is Bublin coiled-coil protein of Homo sapiens (Human).